Consider the following 464-residue polypeptide: tRNA-2-methylthio-N(6)-dimethylallyladenosine synthase (464 aa).

Residues 1-24 form a disordered region; it reads MSDLVPLSRKPAPAAGGPAPSPAA. Positions 8-18 are enriched in low complexity; sequence SRKPAPAAGGP. An MTTase N-terminal domain is found at 27 to 142; sequence RKVYVHTFGC…LPEMVERARD (116 aa). Residues cysteine 36, cysteine 72, cysteine 105, cysteine 180, cysteine 184, and cysteine 187 each contribute to the [4Fe-4S] cluster site. One can recognise a Radical SAM core domain in the interval 166–398; it reads ARGRVTAFVT…LAAQRRIAGE (233 aa). The 64-residue stretch at 401–464 folds into the TRAM domain; the sequence is AGELGKVVEV…GGSSLSGTLA (64 aa).

It belongs to the methylthiotransferase family. MiaB subfamily. In terms of assembly, monomer. [4Fe-4S] cluster is required as a cofactor.

The protein resides in the cytoplasm. It catalyses the reaction N(6)-dimethylallyladenosine(37) in tRNA + (sulfur carrier)-SH + AH2 + 2 S-adenosyl-L-methionine = 2-methylsulfanyl-N(6)-dimethylallyladenosine(37) in tRNA + (sulfur carrier)-H + 5'-deoxyadenosine + L-methionine + A + S-adenosyl-L-homocysteine + 2 H(+). In terms of biological role, catalyzes the methylthiolation of N6-(dimethylallyl)adenosine (i(6)A), leading to the formation of 2-methylthio-N6-(dimethylallyl)adenosine (ms(2)i(6)A) at position 37 in tRNAs that read codons beginning with uridine. This is tRNA-2-methylthio-N(6)-dimethylallyladenosine synthase from Anaeromyxobacter sp. (strain K).